The sequence spans 738 residues: Flagellar radial spoke protein 2 (738 aa).

R104 is modified (asymmetric dimethylarginine). Acidic residues-rich tracts occupy residues P134 to A153 and E161 to G182. The disordered stretch occupies residues P134–I189. Position 260 is an asymmetric dimethylarginine (R260). Residues A357–V426 are disordered. The segment covering E371–E415 has biased composition (acidic residues). 3 positions are modified to asymmetric dimethylarginine: R453, R538, and R615. Residues A674–E738 form a disordered region. A compositionally biased stretch (low complexity) spans P689–S730.

This sequence belongs to the dpy-30 family. Asymmetrically dimethylated at Arg-104, Arg-260, Arg-453, Arg-538 and Arg-615 during flagellum resorption. Probably methylated by PRMT1.

The protein resides in the cytoplasm. It is found in the cytoskeleton. The protein localises to the flagellum axoneme. Its function is as follows. Flagellar radial spokes contribute to the regulation of dynein arm activity and thus the pattern of flagellar bending. They consist of a thin stalk, which is attached to the a subfiber of the outer doublet microtubule, and a bulbous head, which is attached to the stalk and appears to interact with the projections from the central pair of microtubules. Binds calmodulin in a calcium-dependent manner. The sequence is that of Flagellar radial spoke protein 2 from Chlamydomonas reinhardtii (Chlamydomonas smithii).